We begin with the raw amino-acid sequence, 351 residues long: Purine permease 3 (351 aa).

The next 10 membrane-spanning stretches (helical) occupy residues 4–24, 35–55, 72–92, 108–128, 132–152, 168–188, 207–227, 249–269, 274–294, and 304–324; these read ALVI…PLIM, IWFS…PLLF, FFLI…LSGF, TAAL…FFMV, FTPF…VLGM, ITGF…LPLV, FQLI…FIAG, VAVF…GLIF, LVSG…AVIF, and GLSL…EIKS. In terms of domain architecture, EamA spans 45 to 152; the sequence is GFPVIFIPLL…LTVGAAVLGM (108 aa). Residues 329 to 351 are disordered; it reads RRIQQEESQETEQSSLSRPISEC.

The protein belongs to the purine permeases (TC 2.A.7.14) family. As to expression, restricted to pollen.

The protein resides in the membrane. In terms of biological role, may be involved in transport of purine derivatives during pollen germination and tube elongation. In Arabidopsis thaliana (Mouse-ear cress), this protein is Purine permease 3 (PUP3).